A 492-amino-acid polypeptide reads, in one-letter code: Cytochrome P450 26A1 (492 aa).

Cys-437 serves as a coordination point for heme.

Belongs to the cytochrome P450 family. Requires heme as cofactor. Expressed primarily in ovary, brain and eyes.

It localises to the endoplasmic reticulum membrane. The protein resides in the microsome membrane. The enzyme catalyses all-trans-retinoate + reduced [NADPH--hemoprotein reductase] + O2 = all-trans-(4S)-hydroxyretinoate + oxidized [NADPH--hemoprotein reductase] + H2O + H(+). A cytochrome P450 monooxygenase involved in the metabolism of all-trans retinoic acid (atRA), a signaling molecule that binds to retinoic acid receptors and regulates gene transcription. May regulate at-RA signaling during hindbrain development. Mechanistically, uses molecular oxygen inserting one oxygen atom into a substrate, and reducing the second into a water molecule, with two electrons provided by NADPH via cytochrome P450 reductase (CPR; NADPH-ferrihemoprotein reductase). Catalyzes the hydroxylation of carbon hydrogen bonds of atRA primarily at C-4. Has no activity toward 9-cis and 13-cis retinoic acid stereoisomers. May play a role in the oxidative metabolism of xenobiotics such as tazarotenic acid. The polypeptide is Cytochrome P450 26A1 (cyp26a1) (Xenopus laevis (African clawed frog)).